The primary structure comprises 745 residues: Junction plakoglobin (745 aa).

Residue methionine 1 is modified to N-acetylmethionine. O-linked (GlcNAc) threonine glycosylation occurs at threonine 14. Residues serine 99 and serine 125 each carry the phosphoserine modification. ARM repeat units lie at residues 132–171, 172–215, 216–255, 258–297, 298–341, 342–381, 383–420, 423–464, 470–510, 512–551, 574–613, and 615–661; these read NYQDDAELATRALPELTKLLNDEDPVVVTKAAMIVNQLSK, KEAS…LSHH, REGLLAIFKSGGIPALVRMLSSPVESVLFYAITTLHNLLL, EGAKMAVRLADGLQKMVPLLNKNNPKFLAITTDCLQLLAY, GNQE…LSVC, PSNKPAIVEAGGMQALGKHLTSNSPRLVQNCLWTLRNLSD, ATKQEGLENVLKILVNQLSVDDVNVLTCATGTLSNLTC, SKNK…HLTS, EMAQ…NLAL, PANHAPLQEAAVIPRLVQLLVKAHQDAQRHVAAGTQQPYT, PMNRMEIFRLNTIPLFVQLLYSSVENIQRVAAGVLCELAQ, and KEAA…PDYR. The interaction with DSC1 and DSG1 stretch occupies residues 132–297; the sequence is NYQDDAELAT…TTDCLQLLAY (166 aa). At serine 182 the chain carries Phosphoserine. The tract at residues 574–661 is interaction with DSC1; that stretch reads PMNRMEIFRL…ISEDKNPDYR (88 aa). A phosphoserine mark is found at serine 665 and serine 730.

The protein belongs to the beta-catenin family. As to quaternary structure, homodimer. Component of an E-cadherin/catenin adhesion complex composed of at least E-cadherin/CDH1 and gamma-catenin/JUP, and possibly alpha-catenin/CTNNA1; the complex is located to adherens junctions. The stable association of CTNNA1 is controversial as CTNNA1 was shown not to bind to F-actin when assembled in the complex. Interacts with MUC1. Interacts with CAV1. Interacts with PTPRJ. Interacts with DSG1. Interacts with DSC1 and DSC2. Interacts with PKP2. Interacts with PKP3 (via N-terminus); the interaction is required for PKP3 localization to desmosome cell-cell junctions. Interacts with DSG4. Post-translationally, may be phosphorylated by FER. As to expression, expressed in the heart (at protein level).

It localises to the cell junction. The protein resides in the adherens junction. The protein localises to the desmosome. It is found in the cytoplasm. Its subcellular location is the cytoskeleton. It localises to the cell membrane. The protein resides in the nucleus. Common junctional plaque protein. The membrane-associated plaques are architectural elements in an important strategic position to influence the arrangement and function of both the cytoskeleton and the cells within the tissue. The presence of plakoglobin in both the desmosomes and in the intermediate junctions suggests that it plays a central role in the structure and function of submembranous plaques. Acts as a substrate for VE-PTP and is required by it to stimulate VE-cadherin function in endothelial cells. Can replace beta-catenin in E-cadherin/catenin adhesion complexes which are proposed to couple cadherins to the actin cytoskeleton. The protein is Junction plakoglobin of Rattus norvegicus (Rat).